Here is a 476-residue protein sequence, read N- to C-terminus: Glycogen synthase (476 aa).

Residue lysine 15 participates in ADP-alpha-D-glucose binding.

It belongs to the glycosyltransferase 1 family. Bacterial/plant glycogen synthase subfamily.

The catalysed reaction is [(1-&gt;4)-alpha-D-glucosyl](n) + ADP-alpha-D-glucose = [(1-&gt;4)-alpha-D-glucosyl](n+1) + ADP + H(+). It functions in the pathway glycan biosynthesis; glycogen biosynthesis. In terms of biological role, synthesizes alpha-1,4-glucan chains using ADP-glucose. The polypeptide is Glycogen synthase (Bacillus cereus (strain ZK / E33L)).